We begin with the raw amino-acid sequence, 307 residues long: Methionyl-tRNA formyltransferase (307 aa).

108-111 (SLLP) contacts (6S)-5,6,7,8-tetrahydrofolate.

Belongs to the Fmt family.

It carries out the reaction L-methionyl-tRNA(fMet) + (6R)-10-formyltetrahydrofolate = N-formyl-L-methionyl-tRNA(fMet) + (6S)-5,6,7,8-tetrahydrofolate + H(+). Its function is as follows. Attaches a formyl group to the free amino group of methionyl-tRNA(fMet). The formyl group appears to play a dual role in the initiator identity of N-formylmethionyl-tRNA by promoting its recognition by IF2 and preventing the misappropriation of this tRNA by the elongation apparatus. The chain is Methionyl-tRNA formyltransferase from Xanthomonas axonopodis pv. citri (strain 306).